A 270-amino-acid chain; its full sequence is Cytochrome c oxidase subunit 3 (270 aa).

A run of 7 helical transmembrane segments spans residues 22 to 42, 46 to 66, 88 to 108, 128 to 148, 168 to 188, 205 to 225, and 248 to 268; these read PWPIVVSFSLLSLALSLGLTM, IGEMYLVNLALLVVLGSGVLW, INIGFLLFVLSEVLIFSALFW, VGITAVQPTELPLLNTIILLA, SLSGLLITTWLIIIFVICQYI, VFFAGTGLHFLHMVMLAIMLA, and IIYLHVLDVIWLFLYIVFYWW.

This sequence belongs to the cytochrome c oxidase subunit 3 family. As to quaternary structure, component of the cytochrome c oxidase (complex IV, CIV), a multisubunit enzyme composed of a catalytic core of 3 subunits and several supernumerary subunits. The complex exists as a monomer or a dimer and forms supercomplexes (SCs) in the inner mitochondrial membrane with ubiquinol-cytochrome c oxidoreductase (cytochrome b-c1 complex, complex III, CIII).

It is found in the mitochondrion inner membrane. The catalysed reaction is 4 Fe(II)-[cytochrome c] + O2 + 8 H(+)(in) = 4 Fe(III)-[cytochrome c] + 2 H2O + 4 H(+)(out). Functionally, component of the cytochrome c oxidase, the last enzyme in the mitochondrial electron transport chain which drives oxidative phosphorylation. The respiratory chain contains 3 multisubunit complexes succinate dehydrogenase (complex II, CII), ubiquinol-cytochrome c oxidoreductase (cytochrome b-c1 complex, complex III, CIII) and cytochrome c oxidase (complex IV, CIV), that cooperate to transfer electrons derived from NADH and succinate to molecular oxygen, creating an electrochemical gradient over the inner membrane that drives transmembrane transport and the ATP synthase. Cytochrome c oxidase is the component of the respiratory chain that catalyzes the reduction of oxygen to water. Electrons originating from reduced cytochrome c in the intermembrane space (IMS) are transferred via the dinuclear copper A center (CU(A)) of subunit 2 and heme A of subunit 1 to the active site in subunit 1, a binuclear center (BNC) formed by heme A3 and copper B (CU(B)). The BNC reduces molecular oxygen to 2 water molecules using 4 electrons from cytochrome c in the IMS and 4 protons from the mitochondrial matrix. This Vanderwaltozyma polyspora (strain ATCC 22028 / DSM 70294 / BCRC 21397 / CBS 2163 / NBRC 10782 / NRRL Y-8283 / UCD 57-17) (Kluyveromyces polysporus) protein is Cytochrome c oxidase subunit 3 (COX3).